A 612-amino-acid polypeptide reads, in one-letter code: Kelch repeat and BTB domain-containing protein 3 (612 aa).

The BTB domain maps to 52 to 119; that stretch reads YDFKIIMKDE…AYTGKTKITD (68 aa). Positions 150–250 constitute a BACK domain; sequence NLVNCLQLLS…VRLHQLSEET (101 aa). 5 Kelch repeats span residues 291 to 337, 339 to 390, 400 to 450, 452 to 502, and 548 to 595; these read STTE…GSSL, SYGE…STMK, MALD…PEAS, CQNV…ATLI, and GIED…FYCQ.

The sequence is that of Kelch repeat and BTB domain-containing protein 3 from Pongo abelii (Sumatran orangutan).